We begin with the raw amino-acid sequence, 205 residues long: Protein GrpE (205 aa).

Positions 172–205 (KGSTGPGAPAEPAAAPNPYASNGADTGGSFDTKA) are disordered. The segment covering 177-195 (PGAPAEPAAAPNPYASNGA) has biased composition (low complexity).

The protein belongs to the GrpE family. Homodimer.

The protein resides in the cytoplasm. Functionally, participates actively in the response to hyperosmotic and heat shock by preventing the aggregation of stress-denatured proteins, in association with DnaK and GrpE. It is the nucleotide exchange factor for DnaK and may function as a thermosensor. Unfolded proteins bind initially to DnaJ; upon interaction with the DnaJ-bound protein, DnaK hydrolyzes its bound ATP, resulting in the formation of a stable complex. GrpE releases ADP from DnaK; ATP binding to DnaK triggers the release of the substrate protein, thus completing the reaction cycle. Several rounds of ATP-dependent interactions between DnaJ, DnaK and GrpE are required for fully efficient folding. The sequence is that of Protein GrpE from Caulobacter sp. (strain K31).